Reading from the N-terminus, the 184-residue chain is Secreted protein B (184 aa).

Positions 1–19 (MRFILVLVLILGLVSSSFG) are cleaved as a signal peptide. Asparagine 129 carries N-linked (GlcNAc...) asparagine glycosylation. A Cell attachment site motif is present at residues 164 to 166 (RGD).

The protein belongs to the Sct family.

The protein resides in the secreted. In Dictyostelium discoideum (Social amoeba), this protein is Secreted protein B (29C).